The primary structure comprises 163 residues: Putative pre-16S rRNA nuclease (163 aa).

It belongs to the YqgF nuclease family.

The protein localises to the cytoplasm. Functionally, could be a nuclease involved in processing of the 5'-end of pre-16S rRNA. The protein is Putative pre-16S rRNA nuclease of Nitrobacter winogradskyi (strain ATCC 25391 / DSM 10237 / CIP 104748 / NCIMB 11846 / Nb-255).